The chain runs to 288 residues: Translocon-associated protein subunit alpha (288 aa).

The N-terminal stretch at 1–28 is a signal peptide; the sequence is MFNFGSKILVLFLVAFPCGLISFGRVSA. Over 29–208 the chain is Lumenal; it reads DSESAEDIFP…ELEEGLDGET (180 aa). A disordered region spans residues 34–69; it reads EDIFPDSTVDEEEEEEEDEVLVEEDQVPGSETEDDI. N-linked (GlcNAc...) asparagine glycosylation is found at Asn137 and Asn192. A helical transmembrane segment spans residues 209 to 229; sequence IFMYIFLTGLVVLAVFGMYQV. Residues 230–288 lie on the Cytoplasmic side of the membrane; it reads LESRTRKRFPVKVETGTGGMNGVDISWIPQETLNIMSKASASPKASPRKRTKRAVGVDQ. Positions 267-288 are disordered; sequence KASASPKASPRKRTKRAVGVDQ.

The protein belongs to the TRAP-alpha family. As to quaternary structure, heterotetramer of TRAP-alpha, TRAP-beta, TRAP-delta and TRAP-gamma. Post-translationally, phosphorylated in its cytoplasmic tail.

It localises to the endoplasmic reticulum membrane. TRAP proteins are part of a complex whose function is to bind calcium to the ER membrane and thereby regulate the retention of ER resident proteins. May be involved in the recycling of the translocation apparatus after completion of the translocation process or may function as a membrane-bound chaperone facilitating folding of translocated proteins. The protein is Translocon-associated protein subunit alpha (ssr1) of Oncorhynchus mykiss (Rainbow trout).